We begin with the raw amino-acid sequence, 177 residues long: MGDPKKSRRKWEGPGHPWIRINLEKEQVLIGKYGLRNKRELWLAQTIIRKFRHQARSLLALPPAERSTREKQLIQKLYRMGIIEKDNATLDDILGLNEENYLERRLQTIVYKKGLARTIYQARQLIVHGHIAIGGRRVTSPGYIVMRGEEDLIDFYPTSPFKQHPPTQQGEENVQQA.

The 63-residue stretch at 104–166 (RRLQTIVYKK…PTSPFKQHPP (63 aa)) folds into the S4 RNA-binding domain. The tract at residues 158-177 (TSPFKQHPPTQQGEENVQQA) is disordered. Over residues 165-177 (PPTQQGEENVQQA) the composition is skewed to polar residues.

Belongs to the universal ribosomal protein uS4 family. As to quaternary structure, part of the 30S ribosomal subunit. Contacts protein S5. The interaction surface between S4 and S5 is involved in control of translational fidelity.

Its function is as follows. One of the primary rRNA binding proteins, it binds directly to 16S rRNA where it nucleates assembly of the body of the 30S subunit. In terms of biological role, with S5 and S12 plays an important role in translational accuracy. The chain is Small ribosomal subunit protein uS4 from Sulfurisphaera tokodaii (strain DSM 16993 / JCM 10545 / NBRC 100140 / 7) (Sulfolobus tokodaii).